The sequence spans 69 residues: UPF0434 protein Rmet_0534 (69 aa).

This sequence belongs to the UPF0434 family.

In Cupriavidus metallidurans (strain ATCC 43123 / DSM 2839 / NBRC 102507 / CH34) (Ralstonia metallidurans), this protein is UPF0434 protein Rmet_0534.